A 357-amino-acid chain; its full sequence is Glucose-6-phosphatase catalytic subunit 1 (357 aa).

Residues 1-28 (MEERMNVLHDFGIQSTRYLQVNYEDSQD) lie on the Lumenal side of the membrane. The helical transmembrane segment at 29–49 (WFVLVSVIADLRNAFYVLFPI) threads the bilayer. Topologically, residues 50–60 (WFHIQETVGIN) are cytoplasmic. Residues 61-81 (LLWVAVVGDWFNLVFKWILFG) form a helical membrane-spanning segment. The Lumenal portion of the chain corresponds to 82-117 (QRPYWWVLDTDYYSNSSVPLIKQFPVTCETGPGSPS). R83 lines the substrate pocket. Residue N96 is glycosylated (N-linked (GlcNAc...) asparagine). The helical transmembrane segment at 118–138 (GHAMGTAGVYYVMVTSTLAIF) threads the bilayer. H119 functions as the Proton donor in the catalytic mechanism. Over 139–147 (RGKKKSTYG) the chain is Cytoplasmic. Residues 148–168 (FRCLNVVLWLGYWAVQLNVCL) traverse the membrane as a helical segment. The Lumenal segment spans residues 169-170 (SR). Residue R170 participates in substrate binding. Residues 171-191 (IYLAAHFPHQVVAGVLSGIAV) form a helical membrane-spanning segment. Catalysis depends on H176, which acts as the Nucleophile. Residues 192 to 211 (AETFSHIRGIYNASLQRYCL) are Cytoplasmic-facing. Residues 212-232 (ITFFLFGFALGFYLLLKGLGV) traverse the membrane as a helical segment. Residues 233–254 (DLLWTLEKAKRWCERPEWVHLD) lie on the Lumenal side of the membrane. The helical transmembrane segment at 255–275 (TTPFASLFKNLGTLLGLGLAL) threads the bilayer. Residues 276-291 (NSSMYRKSCKGELRKS) lie on the Cytoplasmic side of the membrane. A helical membrane pass occupies residues 292–312 (LPFRLACIVASLGLLHLFDSL). At 313–320 (KPPSQIES) the chain is on the lumenal side. Residues 321 to 341 (IFYILSFCKSATVPFASVSLI) form a helical membrane-spanning segment. Residues 342–357 (PYCLARLLGQTHKKSL) are Cytoplasmic-facing. Residues 354 to 357 (KKSL) carry the Prevents secretion from ER motif.

This sequence belongs to the glucose-6-phosphatase family.

It is found in the endoplasmic reticulum membrane. The catalysed reaction is D-glucose 6-phosphate + H2O = D-glucose + phosphate. It functions in the pathway carbohydrate biosynthesis; gluconeogenesis. Its function is as follows. Hydrolyzes glucose-6-phosphate to glucose in the endoplasmic reticulum. Forms with the glucose-6-phosphate transporter (SLC37A4/G6PT) the complex responsible for glucose production in the terminal step of glycogenolysis and gluconeogenesis. Hence, it is the key enzyme in homeostatic regulation of blood glucose levels. The protein is Glucose-6-phosphatase catalytic subunit 1 (G6pc1) of Rattus norvegicus (Rat).